A 224-amino-acid chain; its full sequence is uncharacterized protein (224 aa).

Positions 9 to 68 (SKMVDVNEITKYLPGFNCGACGYKRCDLFAEALLNKDVKLEDCPFLLRERFKENYEKLKE) constitute a 4Fe-4S domain. [4Fe-4S] cluster-binding residues include C26, C29, C34, and C51.

The cofactor is [4Fe-4S] cluster.

This is an uncharacterized protein from Methanocaldococcus jannaschii (strain ATCC 43067 / DSM 2661 / JAL-1 / JCM 10045 / NBRC 100440) (Methanococcus jannaschii).